Consider the following 654-residue polypeptide: Probable Xaa-Pro aminopeptidase P (654 aa).

Residues D451, D462, E560, and E574 each contribute to the Mn(2+) site.

The protein belongs to the peptidase M24B family. Mn(2+) is required as a cofactor.

It catalyses the reaction Release of any N-terminal amino acid, including proline, that is linked to proline, even from a dipeptide or tripeptide.. Catalyzes the removal of a penultimate prolyl residue from the N-termini of peptides. This Botryotinia fuckeliana (strain B05.10) (Noble rot fungus) protein is Probable Xaa-Pro aminopeptidase P (ampp).